The following is a 1503-amino-acid chain: MMAGEGSTITSRIKNLLRSPSIKLRRSKAGNRREDLSSKVTLEKVLGVTVSGGRGLACDPRSGLVAYSAGCVVVLFNPRKHKQHHILNSSRKTITALAFSPDGKYLVTGESGHMPAVRVWDVAERSQVAELQEHKYGVACVAFSPSAKYIVSVGYQHDMIVNVWAWKKNIVVASNKVSSRVTAVSFSEDCSYFVTAGNRHIKFWYLDDSKTSKVNATVPLLGRSGLLGELRNNLFTDVACGRGEKADSTFCITSSGLLCEFSDRRLLDKWVELRTTVAHCISVTQEYIFCGCADGTVRLFNPSNLHFLSTLPRPHALGTDIASITEASRLFSGGVNARYPDTIALTFDPTNQWLSCVYNDHSIYVWDVRDPKKVGKVYSALYHSSCVWSVEVYPEIKDSHQACLPPSSFITCSSDNTIRLWNTESSGVHGSTLHRNILSNDLIKIIYVDGNTQALLDTELPGGDKADGSLMDPRVGIRSVCISPNGQHLASGDRMGTLRIHELQSLSEMLKVEAHDSEILCLEYSKPDTGLKLLASASRDRLIHVLDAGREYSLQQTLDEHSSSITAVKFAASDGQVRMISCGADKSIYFRTAQKSGEGVQFTRTHHVVRKTTLYDMDVEPSWKYTAIGCQDRNIRIFNISSGKQKKLFKGSQGEDGTLIKVQTDPSGIYIATSCSDKNLSIFDFSSGECVATMFGHSEIVTGMKFSNDCKHLISVSGDSCIFVWRLSSEMTISMRQRLAELRQRQRGIKQQGPTSPQRASGAKQHHAPVVPPSGPALSSDSDKEGEDEGTEEEELPALPILSKSTKKELASGSSPALLRSLSHWEMSRAQETMEYLDPAPVANTGPKRRGRWAQPGVELSVRSMLDLRQIETLAPSPRGPSQDSLAVSPAGPGKHGPQGPELSCVSQNERAPRLQTSQPCSCPHIIQLLSQEEGVFAQDLEPAPIEDGIVYPEPSDSPTMDTSAFQVQAPTGGSLGRMYPGSRGSEKHSPDSACSVDYSSSRLSSPEHPNEDSESTEPLSVDGISSDLEEPAEGDEDEEEEGGTGLCGLQEGGPHTPDQEQFLKQHFETLANGTAPGGPARVLERTESQSISSRFLLQVQTSPLREPSLSSSGLALTSRPDQVSQVSGEQLKGSGATPPGAPPEMEPSSGNSGPKQVAPVLLTRRHNNLDNSWASKKMAATRPLAGLQKAQSVHSLVPQDEVPSSRPLLFQEAETQGSLGSLPQAGGCSSQPHSYQNHTTSSMAKLARSISVGENPGLATEPQAPVPIRISPFNKLALPSRAHLVLDIPKPLPDRPTLTTFSPVSKGLAHNETEQSGPLVSLGKAHTTVEKHSCLGEGTTHKSRTECQAYPGPNHPCAQQLPVNNLLQGPESLQPLSPEKTRNPVESSRPGVALSQDSELALSLQQCEQLVAELQGNVRQAVELYRAVTSYKTPSAEQSHITRLLRDTFSSVRQELEVLAGAVLSSPGGSPGAVGAEQTQALLEQYSELLLRAVERRMERRL.

12 WD repeats span residues 89 to 130, 133 to 174, 176 to 214, 271 to 310, 337 to 376, 382 to 431, 472 to 511, 514 to 556, 560 to 601, 609 to 648, 654 to 693, and 696 to 735; these read SSRK…QVAE, EHKY…VVAS, KVSSRVTAVSFSEDCSYFVTAGNRHIKFWYLDDSKTSKV, VELRTTVAHCISVTQEYIFCGCADGTVRLFNPSNLHFLST, ARYPDTIALTFDPTNQWLSCVYNDHSIYVWDVRDPKKVGK, YHSS…VHGS, DPRVGIRSVCISPNGQHLASGDRMGTLRIHELQSLSEMLK, AHDS…SLQQ, EHSS…EGVQ, VRKTTLYDMDVEPSWKYTAIGCQDRNIRIFNISSGKQKKL, GEDGTLIKVQTDPSGIYIATSCSDKNLSIFDFSSGECVAT, and GHSEIVTGMKFSNDCKHLISVSGDSCIFVWRLSSEMTISM. Disordered regions lie at residues 745–817, 874–917, and 951–1176; these read RQRG…SSPA, LAPS…RLQT, and VYPE…SWAS. Residues 784–796 show a composition bias toward acidic residues; the sequence is KEGEDEGTEEEEL. Composition is skewed to polar residues over residues 905-917 and 957-972; these read CVSQNERAPRLQT and DSPTMDTSAFQVQAPT. The span at 1028–1043 shows a compositional bias: acidic residues; it reads DLEEPAEGDEDEEEEG. Residues 1058–1068 show a composition bias toward basic and acidic residues; that stretch reads PDQEQFLKQHF. Polar residues predominate over residues 1089 to 1129; that stretch reads SQSISSRFLLQVQTSPLREPSLSSSGLALTSRPDQVSQVSG. Ser-1193 is modified (phosphoserine). Disordered regions lie at residues 1217-1238 and 1369-1391; these read QGSLGSLPQAGGCSSQPHSYQN and QGPESLQPLSPEKTRNPVESSRP.

Can form homodimers (via C-terminus). Interacts (via C-terminus) with WDR62 (via C-terminus). Interacts with MAPK9. Interacts (via N-terminus) with NOD2; the interaction is enhanced in presence of muramyl dipeptide (MDP). Interacts with MAPK10. As to expression, ubiquitously expressed. Highest expression observed in brain.

Its subcellular location is the cytoplasm. The protein resides in the nucleus. It is found in the cytoskeleton. The protein localises to the spindle pole. In terms of biological role, negative regulator of NOD2 function. It down-regulates NOD2-induced processes such as activation of NF-kappa-B signaling, IL8 secretion and antibacterial response. Involved in JNK signaling pathway. This chain is Mitogen-activated protein kinase-binding protein 1 (Mapkbp1), found in Mus musculus (Mouse).